Here is a 360-residue protein sequence, read N- to C-terminus: Mannonate dehydratase (360 aa).

Belongs to the mannonate dehydratase family. It depends on Fe(2+) as a cofactor. Mn(2+) serves as cofactor.

It catalyses the reaction D-mannonate = 2-dehydro-3-deoxy-D-gluconate + H2O. It participates in carbohydrate metabolism; pentose and glucuronate interconversion. Its function is as follows. Catalyzes the dehydration of D-mannonate. The polypeptide is Mannonate dehydratase (Thermotoga sp. (strain RQ2)).